The chain runs to 261 residues: Thiamine thiazole synthase (261 aa).

NAD(+) is bound by residues Ser-40, 59-60 (ER), Gly-67, Val-133, and 159-161 (HID). Fe cation is bound by residues Asp-161 and His-176. The NAD(+) site is built by Ser-179 and Met-226. A glycine-binding site is contributed by Arg-236.

Belongs to the THI4 family. As to quaternary structure, homooctamer; tetramer of dimers. Fe(2+) serves as cofactor.

It catalyses the reaction hydrogen sulfide + glycine + NAD(+) = ADP-5-ethyl-4-methylthiazole-2-carboxylate + nicotinamide + 3 H2O + H(+). It functions in the pathway cofactor biosynthesis; thiamine diphosphate biosynthesis. Functionally, involved in the biosynthesis of the thiazole moiety of thiamine. Catalyzes the conversion of NAD and glycine to adenosine diphosphate 5-(2-hydroxyethyl)-4-methylthiazole-2-carboxylate (ADT), an adenylated thiazole intermediate, using free sulfide as a source of sulfur. This chain is Thiamine thiazole synthase, found in Methanococcus maripaludis (strain C5 / ATCC BAA-1333).